Here is a 313-residue protein sequence, read N- to C-terminus: GMP synthase [glutamine-hydrolyzing] subunit B (313 aa).

Positions 6–190 (KVWEKFIEEK…LGLPEKIYNR (185 aa)) constitute a GMPS ATP-PPase domain. Residue 33-39 (SGGVDSS) participates in ATP binding.

Heterodimer composed of a glutamine amidotransferase subunit (A) and a GMP-binding subunit (B).

The catalysed reaction is XMP + L-glutamine + ATP + H2O = GMP + L-glutamate + AMP + diphosphate + 2 H(+). The protein operates within purine metabolism; GMP biosynthesis; GMP from XMP (L-Gln route): step 1/1. Catalyzes the synthesis of GMP from XMP. This Pyrococcus furiosus (strain ATCC 43587 / DSM 3638 / JCM 8422 / Vc1) protein is GMP synthase [glutamine-hydrolyzing] subunit B (guaAB).